The primary structure comprises 152 residues: FMN reductase (NADH) RutF (152 aa).

This sequence belongs to the non-flavoprotein flavin reductase family. RutF subfamily.

It catalyses the reaction FMNH2 + NAD(+) = FMN + NADH + 2 H(+). Functionally, catalyzes the reduction of FMN to FMNH2 which is used to reduce pyrimidine by RutA via the Rut pathway. This chain is FMN reductase (NADH) RutF, found in Shigella flexneri.